The primary structure comprises 254 residues: Ornithine decarboxylase antizyme (254 aa).

Belongs to the ODC antizyme family. As to quaternary structure, interacts with ODC1 and thereby sterically blocks ODC homodimerization.

In terms of biological role, ornithine decarboxylase (ODC) antizyme protein that negatively regulates ODC activity and intracellular polyamine biosynthesis and uptake in response to increased intracellular polyamine levels. Binds to ODC monomers, inhibiting the assembly of the functional ODC homodimer, and targets the monomers for ubiquitin-independent proteolytic destruction by the 26S proteasome. Required for cellular differentiation in neuronal and myogenic lineages during embryonic development. This Drosophila melanogaster (Fruit fly) protein is Ornithine decarboxylase antizyme (Oda).